The chain runs to 73 residues: Conotoxin Cl14.8 (73 aa).

Positions 1–19 (MKLSVTFIALMLTMTLTQG) are cleaved as a signal peptide. Residues 20 to 47 (FVLQAIDGRDNSGLDDLSEADSMEHQLQ) constitute a propeptide that is removed on maturation.

Belongs to the conotoxin L superfamily. Contains 2 disulfide bonds. Expressed by the venom duct.

The protein resides in the secreted. The polypeptide is Conotoxin Cl14.8 (Californiconus californicus (California cone)).